The following is a 33-amino-acid chain: Dermaseptin-J7 (33 aa).

Position 33 is a valine amide (V33).

In terms of tissue distribution, expressed by the skin glands.

The protein resides in the secreted. Its function is as follows. Has antimicrobial activity. The chain is Dermaseptin-J7 from Phasmahyla jandaia (Jandaia leaf frog).